The following is a 473-amino-acid chain: 3-oxoacyl-[acyl-carrier-protein] synthase I, chloroplastic (473 aa).

The segment covering 1–10 (MQALQSSSLR) has biased composition (polar residues). The tract at residues 1–26 (MQALQSSSLRASPPNPLRLPSNRQSH) is disordered. The transit peptide at 1-46 (MQALQSSSLRASPPNPLRLPSNRQSHQLITNARPLRRQQRSFISAS) directs the protein to the chloroplast. The 411-residue stretch at 60 to 470 (KKRVVITGMG…GHNSVVAFSA (411 aa)) folds into the Ketosynthase family 3 (KS3) domain. Catalysis depends on for beta-ketoacyl synthase activity residues cysteine 224, histidine 364, and histidine 400.

Belongs to the thiolase-like superfamily. Beta-ketoacyl-ACP synthases family. As to quaternary structure, homodimer.

The protein localises to the plastid. It localises to the chloroplast stroma. It carries out the reaction a fatty acyl-[ACP] + malonyl-[ACP] + H(+) = a 3-oxoacyl-[ACP] + holo-[ACP] + CO2. Catalyzes the condensation reaction of fatty acid synthesis by the addition to an acyl acceptor of two carbons from malonyl-ACP. Specific for elongation from C-10 to unsaturated C-16 and C-18 fatty acids. The polypeptide is 3-oxoacyl-[acyl-carrier-protein] synthase I, chloroplastic (KAS1) (Arabidopsis thaliana (Mouse-ear cress)).